Consider the following 191-residue polypeptide: Pyridoxal 5'-phosphate synthase subunit PdxT (191 aa).

Position 46–48 (46–48) interacts with L-glutamine; it reads GES. The Nucleophile role is filled by Cys75. L-glutamine contacts are provided by residues Arg101 and 129-130; that span reads IR. Catalysis depends on charge relay system residues His165 and Glu167.

It belongs to the glutaminase PdxT/SNO family. As to quaternary structure, in the presence of PdxS, forms a dodecamer of heterodimers. Only shows activity in the heterodimer.

The catalysed reaction is aldehydo-D-ribose 5-phosphate + D-glyceraldehyde 3-phosphate + L-glutamine = pyridoxal 5'-phosphate + L-glutamate + phosphate + 3 H2O + H(+). The enzyme catalyses L-glutamine + H2O = L-glutamate + NH4(+). It functions in the pathway cofactor biosynthesis; pyridoxal 5'-phosphate biosynthesis. Catalyzes the hydrolysis of glutamine to glutamate and ammonia as part of the biosynthesis of pyridoxal 5'-phosphate. The resulting ammonia molecule is channeled to the active site of PdxS. The chain is Pyridoxal 5'-phosphate synthase subunit PdxT from Staphylococcus saprophyticus subsp. saprophyticus (strain ATCC 15305 / DSM 20229 / NCIMB 8711 / NCTC 7292 / S-41).